An 808-amino-acid polypeptide reads, in one-letter code: Zinc finger protein 148 (808 aa).

2 disordered regions span residues 15 to 86 (SPVG…ISQD) and 131 to 162 (DSLI…SPAK). Residues 56–73 (AEDDDDEDEEEDDDDDLA) show a composition bias toward acidic residues. The segment covering 150–159 (HKKKKRKQRS) has biased composition (basic residues). 4 consecutive C2H2-type zinc fingers follow at residues 180–202 (HICE…VFIH), 208–230 (FQCN…EKIH), 236–258 (FRCD…KRTH), and 264–287 (YQCD…RMCH). Disordered regions lie at residues 305-338 (RTPE…ASIT), 596-617 (SINS…QAPP), and 705-736 (SFSG…DPQS). 2 stretches are compositionally biased toward polar residues: residues 705–718 (SFSG…SVSP) and 725–736 (QVTSPKKTDPQS).

The protein belongs to the krueppel C2H2-type zinc-finger protein family.

Its subcellular location is the nucleus. Involved in transcriptional regulation. Represses the transcription of a number of genes. Required for primitive and definitive hematopoiesis during embryonic development. The polypeptide is Zinc finger protein 148 (znf148) (Danio rerio (Zebrafish)).